Here is a 496-residue protein sequence, read N- to C-terminus: uncharacterized protein (496 aa).

12 helical membrane passes run 33–53 (FLKGLLSAITLLFFILLLIFA), 89–109 (LNFLIVFRFFILSFTLFYTLI), 127–147 (PWFVLYLVIATISFLLFFTFF), 154–174 (VFNLVFLLLVLFLLNLSYEIF), 193–213 (LIIAMVFQALLLLFVIITPLV), 247–267 (IILIAFFFFLITFIVLANTNF), 285–305 (LWFILLLFSAIFIWLLRVFAY), 320–340 (LWVYILQSFFAIIILILYMVF), 355–375 (LLNLVVTQTILSLSLFLVTLF), 382–402 (SLINVFITITVQMSVFGIYIF), 411–431 (LLVLLKVIMILIILTAAIVGF), and 455–475 (VQIMLLLNFSLNFTLISYLTI).

It is found in the cell membrane. This is an uncharacterized protein from Ureaplasma parvum serovar 3 (strain ATCC 700970).